Here is a 20-residue protein sequence, read N- to C-terminus: Alpha-basrubrin (20 aa).

Residues 1–13 (GADFQECMKEHSQ) show a composition bias toward basic and acidic residues. The tract at residues 1–20 (GADFQECMKEHSQKQHQHQG) is disordered.

Possesses antifungal activity against B.cinerea, M.arachidicola and F.oxysporum but not C.comatus and R.solani. Inhibits HIV-1 reverse transcriptase and cell-free translation. This is Alpha-basrubrin from Basella alba (Malabar spinach).